The sequence spans 416 residues: Phosphoglycerate kinase (416 aa).

The (2R)-3-phosphoglycerate site is built by V23, D24, F25, N26, R39, S62, H63, G65, R66, L121, R122, H169, and R170. Residue G213 coordinates ADP. G213 provides a ligand contact to CDP. Residues A214 and K215 each coordinate AMP. A214 lines the ATP pocket. A214 is a Mg(2+) binding site. Position 218 (D218) interacts with CDP. D218 is a Mg(2+) binding site. K219 is an AMP binding site. K219 lines the ATP pocket. G237 contributes to the ADP binding site. G237 contacts CDP. Residues G238 and G312 each coordinate AMP. ATP-binding residues include G238 and G312. The CDP site is built by G337 and F342. F342 serves as a coordination point for ADP. Position 343 (E343) interacts with AMP. Positions 343, 374, and 375 each coordinate ATP. D374 contributes to the Mg(2+) binding site.

The protein belongs to the phosphoglycerate kinase family. Monomer. Requires Mg(2+) as cofactor.

Its subcellular location is the cytoplasm. The protein localises to the mitochondrion. The enzyme catalyses (2R)-3-phosphoglycerate + ATP = (2R)-3-phospho-glyceroyl phosphate + ADP. It participates in carbohydrate degradation; glycolysis; pyruvate from D-glyceraldehyde 3-phosphate: step 2/5. Its function is as follows. Catalyzes one of the two ATP producing reactions in the glycolytic pathway via the reversible conversion of 1,3-diphosphoglycerate to 3-phosphoglycerate. Both L- and D- forms of purine and pyrimidine nucleotides can be used as substrates, but the activity is much lower on pyrimidines. Negatively regulates the biosynthesis of acetyl-CoA from pyruvate in the mitochondrion. The chain is Phosphoglycerate kinase (pgkA) from Agaricus bisporus (White button mushroom).